The chain runs to 123 residues: U11/U12 small nuclear ribonucleoprotein 25 kDa protein (123 aa).

A Ubiquitin-like domain is found at 32-123 (MTVRVCKMDG…VSFIKKLRQK (92 aa)).

As to quaternary structure, component of the U11/U12 snRNPs that are part of the U12-type spliceosome.

The protein resides in the nucleus. The chain is U11/U12 small nuclear ribonucleoprotein 25 kDa protein (SNRNP25) from Bos taurus (Bovine).